Reading from the N-terminus, the 352-residue chain is Secreted RxLR effector protein 122 (352 aa).

The first 21 residues, methionine 1–alanine 21, serve as a signal peptide directing secretion. Positions glutamine 48–arginine 65 match the RxLR-dEER motif. Positions arginine 280 to threonine 290 are enriched in low complexity. Positions arginine 280–proline 352 are disordered. Residues alanine 302–glutamate 315 are compositionally biased toward polar residues.

The protein belongs to the RxLR effector family.

Its subcellular location is the secreted. The protein localises to the host nucleus. In terms of biological role, secreted effector that acts as an elicitor that induces cell death in host plant cells. This Plasmopara viticola (Downy mildew of grapevine) protein is Secreted RxLR effector protein 122.